We begin with the raw amino-acid sequence, 311 residues long: tRNA-cytidine(32) 2-sulfurtransferase (311 aa).

Residues 47–52 carry the PP-loop motif motif; it reads SGGKDS. Residues Cys122, Cys125, and Cys213 each contribute to the [4Fe-4S] cluster site.

This sequence belongs to the TtcA family. As to quaternary structure, homodimer. It depends on Mg(2+) as a cofactor. [4Fe-4S] cluster serves as cofactor.

It is found in the cytoplasm. The enzyme catalyses cytidine(32) in tRNA + S-sulfanyl-L-cysteinyl-[cysteine desulfurase] + AH2 + ATP = 2-thiocytidine(32) in tRNA + L-cysteinyl-[cysteine desulfurase] + A + AMP + diphosphate + H(+). It functions in the pathway tRNA modification. Functionally, catalyzes the ATP-dependent 2-thiolation of cytidine in position 32 of tRNA, to form 2-thiocytidine (s(2)C32). The sulfur atoms are provided by the cysteine/cysteine desulfurase (IscS) system. This is tRNA-cytidine(32) 2-sulfurtransferase from Citrobacter koseri (strain ATCC BAA-895 / CDC 4225-83 / SGSC4696).